The primary structure comprises 108 residues: Translation initiation factor 1A (108 aa).

The S1-like domain occupies 10–84 (IRVITPNKKS…EKGDIIYRYT (75 aa)).

This sequence belongs to the eIF-1A family.

Functionally, seems to be required for maximal rate of protein biosynthesis. Enhances ribosome dissociation into subunits and stabilizes the binding of the initiator Met-tRNA(I) to 40 S ribosomal subunits. The polypeptide is Translation initiation factor 1A (Picrophilus torridus (strain ATCC 700027 / DSM 9790 / JCM 10055 / NBRC 100828 / KAW 2/3)).